We begin with the raw amino-acid sequence, 44 residues long: Phosphatase RapA inhibitor (44 aa).

A propeptide spanning residues 1-39 (MKSKWMSGLLLVAVGFSFTQVMVHAGETANTEGKTFHIA) is cleaved from the precursor.

The protein belongs to the Phr family. Interacts with RapA and inhibits its interaction with Spo0F. In terms of processing, secreted with a propeptide domain, which is cleaved in the cell wall by the secreted serine proteases subtilisin and Vpr to produce a mature signaling peptide. Contains a predicted signal peptide cleavage site in the N-terminal region, however the propeptide is probably subject to only one processing event, at the N-terminal end of the mature peptide.

Its subcellular location is the secreted. The protein resides in the cytoplasm. With respect to regulation, inhibition of RapA requires a free carboxylate group at the C-terminal end of the PhrA pentapeptide. A free C-terminal carboxylic acid PhrA pentapeptide inhibits RapA phosphatase activity at a 1:1 ratio and is approximately 200 fold more active than a C-terminal amide peptide. Signaling molecule involved in the regulation of sporulation. Secreted during production, but the mature peptide acts intracellularly, indicating that it needs to be imported into the cell to function. Inhibitor of the RapA phosphatase activity. Does not act on RapB. This Bacillus subtilis (strain 168) protein is Phosphatase RapA inhibitor.